We begin with the raw amino-acid sequence, 142 residues long: Large ribosomal subunit protein bL21 (142 aa).

Residues 73 to 84 (KRRRQNSKRTRG) are compositionally biased toward basic residues. The tract at residues 73 to 142 (KRRRQNSKRT…KAAAKAESAE (70 aa)) is disordered. Residues 107–125 (KAAEKKAPKADAAEGEAAK) show a composition bias toward basic and acidic residues. Basic residues predominate over residues 126-135 (PKKAAPKKAA).

Belongs to the bacterial ribosomal protein bL21 family. In terms of assembly, part of the 50S ribosomal subunit. Contacts protein L20.

Its function is as follows. This protein binds to 23S rRNA in the presence of protein L20. The polypeptide is Large ribosomal subunit protein bL21 (Brucella canis (strain ATCC 23365 / NCTC 10854 / RM-666)).